Here is a 1274-residue protein sequence, read N- to C-terminus: DENN domain-containing protein 5B (1274 aa).

An N-acetylserine modification is found at serine 2. The 206-residue stretch at 39 to 244 (DELAGENFDQ…EVPLPPPGRS (206 aa)) folds into the uDENN domain. Phosphoserine occurs at positions 49 and 178. The 137-residue stretch at 263–399 (ELPLSDYPLR…VDFIQELSEV (137 aa)) folds into the cDENN domain. Positions 401 to 581 (VQFGIPPEGS…DNKIMSQWEE (181 aa)) constitute a dDENN domain. The RUN 1 domain maps to 772 to 932 (LEENTLIASL…DYFCFTSVFT (161 aa)). Serine 822 bears the Phosphoserine mark. The helical transmembrane segment at 916–936 (LLSLNAVDYFCFTSVFTTIMI) threads the bilayer. Positions 936–1044 (IPYRSVIIPI…DDGSLERILI (109 aa)) constitute a PLAT domain. Threonine 1062 carries the phosphothreonine modification. A phosphoserine mark is found at serine 1068, serine 1076, and serine 1079. The region spanning 1118–1267 (TVLLCGENGL…QDFTIVLEGS (150 aa)) is the RUN 2 domain.

Belongs to the RAB6IP1 family.

The protein localises to the membrane. Guanine nucleotide exchange factor (GEF) which may activate RAB39A and/or RAB39B. Promotes the exchange of GDP to GTP, converting inactive GDP-bound Rab proteins into their active GTP-bound form. The polypeptide is DENN domain-containing protein 5B (DENND5B) (Homo sapiens (Human)).